Consider the following 400-residue polypeptide: UDP-glucuronate:glycolipid 2-beta-glucuronosyltransferase (400 aa).

The Proton acceptor role is filled by D157. UDP-alpha-D-glucuronate-binding positions include 230 to 231 (SM), 272 to 273 (EM), Y292, and 306 to 310 (MKLLQ). Residues 377-400 (PETRLYPHPPTAAPQLSSEAALSH) are disordered. Over residues 390–400 (PQLSSEAALSH) the composition is skewed to polar residues.

This sequence belongs to the glycosyltransferase 70 family.

It is found in the cell inner membrane. The enzyme catalyses alpha-D-Man-(1-&gt;3)-beta-D-Glc-(1-&gt;4)-alpha-D-Glc-1-di-trans,octa-cis-undecaprenyl diphosphate + UDP-alpha-D-glucuronate = beta-D-GlcA-(1-&gt;2)-alpha-D-Man-(1-&gt;3)-beta-D-Glc-(1-&gt;4)-alpha-D-Glc-di-trans,octa-cis-undecaprenyl diphosphate + UDP + H(+). It functions in the pathway glycan biosynthesis; xanthan biosynthesis. Its function is as follows. Catalyzes the transfer of a glucuronic acid (GlcA) residue from UDP-glucuronate to mannose-alpha-1,3-glucose-beta-1,4-glucose-P-P-polyisoprenyl to form the lipid-linked tetrasaccharide GlcA-Man-Glc(2)-PP-Pol, with a glucuronic acid-beta-mannose linkage. Is involved in the biosynthesis of the exopolysaccharide xanthan, since it catalyzes the fourth glycosylation step in the assembly of the pentasaccharide-P-P-polyisoprenyl repeating unit of xanthan. Is unable to use the trisaccharide acceptor freed from the pyrophosphate lipid moiety. Does not show specificity for the lipidic portion of the acceptor. Shows diminished activity when tested with 6-O-acetyl-mannose-alpha-1,3-glucose-beta-1,4-glucose-P-P-polyisoprenyl, a putative intermediate in the synthesis of xanthan; this could indicate that acetylation of the internal mannose takes place after the formation of the GumK product. The chain is UDP-glucuronate:glycolipid 2-beta-glucuronosyltransferase (gumK) from Xanthomonas campestris pv. campestris.